The chain runs to 242 residues: MHTLFISDLHLSPKHPDITASFIQFMREEAIKADALYVLGDLFDFWIGDDDPTTFAEQIKSEFRQLTQQGVPCYFTKGNRDFLVGKRFAQQTGVQLLPDEAVIDLYGQKAVVLHGDTLCTQDTRYLEFRAKVHQPWLQRLFGLLPFALKQKLVRKIQSDIRDDKQHKSMMIMDVTPSEVIAVMHRYNVDLMIHGHTHRPAIHSIQTDDQTLKTRIVLGDWYSQSSILVYSKQLATHYCRDHS.

Mn(2+) is bound by residues D8, H10, D41, N79, and H114. 79-80 (NR) serves as a coordination point for substrate. Residues D122, K164, K167, and H195 each coordinate substrate. H195 and H197 together coordinate Mn(2+).

This sequence belongs to the LpxH family. Requires Mn(2+) as cofactor.

The protein localises to the cell inner membrane. It carries out the reaction UDP-2-N,3-O-bis[(3R)-3-hydroxytetradecanoyl]-alpha-D-glucosamine + H2O = 2-N,3-O-bis[(3R)-3-hydroxytetradecanoyl]-alpha-D-glucosaminyl 1-phosphate + UMP + 2 H(+). Its pathway is glycolipid biosynthesis; lipid IV(A) biosynthesis; lipid IV(A) from (3R)-3-hydroxytetradecanoyl-[acyl-carrier-protein] and UDP-N-acetyl-alpha-D-glucosamine: step 4/6. Hydrolyzes the pyrophosphate bond of UDP-2,3-diacylglucosamine to yield 2,3-diacylglucosamine 1-phosphate (lipid X) and UMP by catalyzing the attack of water at the alpha-P atom. Involved in the biosynthesis of lipid A, a phosphorylated glycolipid that anchors the lipopolysaccharide to the outer membrane of the cell. In Vibrio cholerae serotype O1 (strain ATCC 39315 / El Tor Inaba N16961), this protein is UDP-2,3-diacylglucosamine hydrolase.